Here is a 712-residue protein sequence, read N- to C-terminus: Phosphoribosylformylglycinamidine synthase subunit PurL (712 aa).

H32 is a catalytic residue. Y35 is a binding site for ATP. E76 is a Mg(2+) binding site. Substrate is bound by residues 77 to 80 (SHNH) and R99. H78 serves as the catalytic Proton acceptor. D100 is a Mg(2+) binding site. Q223 contributes to the substrate binding site. A Mg(2+)-binding site is contributed by D251. 295-297 (ESQ) is a binding site for substrate. 2 residues coordinate ATP: D470 and G507. N508 contacts Mg(2+). Residue S510 coordinates substrate.

Belongs to the FGAMS family. Monomer. Part of the FGAM synthase complex composed of 1 PurL, 1 PurQ and 2 PurS subunits.

It is found in the cytoplasm. The enzyme catalyses N(2)-formyl-N(1)-(5-phospho-beta-D-ribosyl)glycinamide + L-glutamine + ATP + H2O = 2-formamido-N(1)-(5-O-phospho-beta-D-ribosyl)acetamidine + L-glutamate + ADP + phosphate + H(+). It participates in purine metabolism; IMP biosynthesis via de novo pathway; 5-amino-1-(5-phospho-D-ribosyl)imidazole from N(2)-formyl-N(1)-(5-phospho-D-ribosyl)glycinamide: step 1/2. Its function is as follows. Part of the phosphoribosylformylglycinamidine synthase complex involved in the purines biosynthetic pathway. Catalyzes the ATP-dependent conversion of formylglycinamide ribonucleotide (FGAR) and glutamine to yield formylglycinamidine ribonucleotide (FGAM) and glutamate. The FGAM synthase complex is composed of three subunits. PurQ produces an ammonia molecule by converting glutamine to glutamate. PurL transfers the ammonia molecule to FGAR to form FGAM in an ATP-dependent manner. PurS interacts with PurQ and PurL and is thought to assist in the transfer of the ammonia molecule from PurQ to PurL. This chain is Phosphoribosylformylglycinamidine synthase subunit PurL, found in Thermococcus gammatolerans (strain DSM 15229 / JCM 11827 / EJ3).